A 137-amino-acid chain; its full sequence is Large ribosomal subunit protein uL16 (137 aa).

Belongs to the universal ribosomal protein uL16 family. In terms of assembly, part of the 50S ribosomal subunit.

Binds 23S rRNA and is also seen to make contacts with the A and possibly P site tRNAs. This Streptococcus pneumoniae serotype 2 (strain D39 / NCTC 7466) protein is Large ribosomal subunit protein uL16.